The primary structure comprises 489 residues: Protein nucleotidyltransferase YdiU (489 aa).

ATP is bound by residues Gly88, Gly90, Arg91, Lys111, Asp123, Gly124, Arg174, and Arg181. Asp250 functions as the Proton acceptor in the catalytic mechanism. Positions 251 and 260 each coordinate Mg(2+). Asp260 is an ATP binding site.

The protein belongs to the SELO family. Mg(2+) serves as cofactor. Requires Mn(2+) as cofactor.

The catalysed reaction is L-seryl-[protein] + ATP = 3-O-(5'-adenylyl)-L-seryl-[protein] + diphosphate. It catalyses the reaction L-threonyl-[protein] + ATP = 3-O-(5'-adenylyl)-L-threonyl-[protein] + diphosphate. It carries out the reaction L-tyrosyl-[protein] + ATP = O-(5'-adenylyl)-L-tyrosyl-[protein] + diphosphate. The enzyme catalyses L-histidyl-[protein] + UTP = N(tele)-(5'-uridylyl)-L-histidyl-[protein] + diphosphate. The catalysed reaction is L-seryl-[protein] + UTP = O-(5'-uridylyl)-L-seryl-[protein] + diphosphate. It catalyses the reaction L-tyrosyl-[protein] + UTP = O-(5'-uridylyl)-L-tyrosyl-[protein] + diphosphate. Its function is as follows. Nucleotidyltransferase involved in the post-translational modification of proteins. It can catalyze the addition of adenosine monophosphate (AMP) or uridine monophosphate (UMP) to a protein, resulting in modifications known as AMPylation and UMPylation. The chain is Protein nucleotidyltransferase YdiU from Vibrio cholerae serotype O1 (strain ATCC 39315 / El Tor Inaba N16961).